Reading from the N-terminus, the 147-residue chain is Large ribosomal subunit protein uL13 (147 aa).

Belongs to the universal ribosomal protein uL13 family. Part of the 50S ribosomal subunit.

In terms of biological role, this protein is one of the early assembly proteins of the 50S ribosomal subunit, although it is not seen to bind rRNA by itself. It is important during the early stages of 50S assembly. This Deinococcus geothermalis (strain DSM 11300 / CIP 105573 / AG-3a) protein is Large ribosomal subunit protein uL13.